The chain runs to 329 residues: Ig gamma-2 chain C region (329 aa).

Disulfide bonds link Cys-28/Cys-79, Cys-142/Cys-202, and Cys-248/Cys-308. N-linked (GlcNAc...) asparagine glycosylation is present at Asn-178.

The protein resides in the secreted. The protein is Ig gamma-2 chain C region of Cavia porcellus (Guinea pig).